Consider the following 255-residue polypeptide: 5'-nucleotidase SurE (255 aa).

Asp8, Asp9, Ser40, and Asn93 together coordinate a divalent metal cation.

It belongs to the SurE nucleotidase family. The cofactor is a divalent metal cation.

It is found in the cytoplasm. The catalysed reaction is a ribonucleoside 5'-phosphate + H2O = a ribonucleoside + phosphate. In terms of biological role, nucleotidase that shows phosphatase activity on nucleoside 5'-monophosphates. This is 5'-nucleotidase SurE from Nitrobacter winogradskyi (strain ATCC 25391 / DSM 10237 / CIP 104748 / NCIMB 11846 / Nb-255).